The following is a 622-amino-acid chain: Sodium-coupled monocarboxylate transporter 1 (622 aa).

Residues 1-15 (MVTPGNIGSFTVWDY) lie on the Extracellular side of the membrane. The chain crosses the membrane as a helical span at residues 16 to 36 (LVFALMLLISAVIGIYYAFAG). Topologically, residues 37–51 (GGQKTSKDFLMGGRS) are cytoplasmic. A helical transmembrane segment spans residues 52 to 72 (MTAVPVALSLTASFMSAVTVL). Residues 73–83 (GTPAEVYRFGA) lie on the Extracellular side of the membrane. Residues 84 to 104 (MFIIFAFSYTIVVIISSEVFL) form a helical membrane-spanning segment. The Cytoplasmic segment spans residues 105 to 128 (PVFYRLGITSTYEYLELRFNKFVR). Residues 129 to 149 (LLGTILFIIQTVLYTGIVIYA) traverse the membrane as a helical segment. The Extracellular segment spans residues 150–161 (PALALNQVTGFD). Residues 162–182 (LWGAVVATGVVCTFYCTMGGL) form a helical membrane-spanning segment. The Cytoplasmic portion of the chain corresponds to 183–184 (KA). The chain crosses the membrane as a helical span at residues 185–205 (VVWTDVFQVGIMVAGFTSVII). Over 206–241 (RAVVVQGGIGPILNDSYYGDRLNFWDFDPNPLKRHT) the chain is Extracellular. Asparagine 219 carries N-linked (GlcNAc...) asparagine glycosylation. The helical transmembrane segment at 242–262 (FWTIVVGGTFTWTGIYGVNQA) threads the bilayer. Residues 263–283 (QVQRYIACKTRFQAKMSLYVN) are Cytoplasmic-facing. Residues 284-304 (LIGLWAILACAVLSGLAMYSI) traverse the membrane as a helical segment. The Extracellular segment spans residues 305–336 (YKDCDPWTAKFVSAPDQLMPYLALDILRDYPG). The chain crosses the membrane as a helical span at residues 337–357 (LPGLFVSCAYSGTLSTVSSSI). The Cytoplasmic portion of the chain corresponds to 358–389 (NALAAVTVEDLIKPYIRSLSEKKMSWISKGTS). Residues 390-410 (LLYGAICIGMAGIASLMGGLL) form a helical membrane-spanning segment. Topologically, residues 411-415 (QAALS) are extracellular. Residues 416–436 (IFGMVGGPLLGLFSLGILFPF) traverse the membrane as a helical segment. Residues 437–438 (VN) are Cytoplasmic-facing. The helical transmembrane segment at 439-459 (SLGAVIGLLSGFAISLWVGIG) threads the bilayer. The Extracellular segment spans residues 460–521 (SQIYAPSPSS…LADSWYSLSY (62 aa)). Residues asparagine 481 and asparagine 488 are each glycosylated (N-linked (GlcNAc...) asparagine). Residues 522-542 (LYFSTIGTIVAVLVGVIVSLL) traverse the membrane as a helical segment. Over 543–622 (SGGLKQNVNR…KGEKTNGITA (80 aa)) the chain is Cytoplasmic. Residues 591-622 (DNDMEQGTDNPAFNNMEMTSTEKGEKTNGITA) are disordered. Positions 595-609 (EQGTDNPAFNNMEMT) are enriched in polar residues.

Belongs to the sodium:solute symporter (SSF) (TC 2.A.21) family. As to expression, in the gastrula and neurula stages, expressed in the gastrula anterior endoderm and in the entire circumference of the blastopore lip superficial endoderm. At tailbud stages, abundant expression observed in the ventral midgut region. As development proceeds expression becomes restricted to the liver diverticulum and ultimately to the presumptive gallbladder, by tadpole stage 35. Also present in pronephros and the tip of the tail.

The protein resides in the apical cell membrane. The enzyme catalyses (S)-lactate(out) + 2 Na(+)(out) = (S)-lactate(in) + 2 Na(+)(in). It catalyses the reaction propanoate(out) + 2 Na(+)(out) = propanoate(in) + 2 Na(+)(in). It carries out the reaction pyruvate(out) + 2 Na(+)(out) = pyruvate(in) + 2 Na(+)(in). The catalysed reaction is acetate(out) + 2 Na(+)(out) = acetate(in) + 2 Na(+)(in). The enzyme catalyses butanoate(out) + 2 Na(+)(out) = butanoate(in) + 2 Na(+)(in). It catalyses the reaction nicotinate(out) + 2 Na(+)(out) = nicotinate(in) + 2 Na(+)(in). It carries out the reaction (R)-3-hydroxybutanoate(out) + 2 Na(+)(out) = (R)-3-hydroxybutanoate(in) + 2 Na(+)(in). The catalysed reaction is acetoacetate(out) + 2 Na(+)(out) = acetoacetate(in) + 2 Na(+)(in). The enzyme catalyses 4-methyl-2-oxopentanoate(out) + 2 Na(+)(out) = 4-methyl-2-oxopentanoate(in) + 2 Na(+)(in). It catalyses the reaction 5-oxo-L-proline(out) + 2 Na(+)(out) = 5-oxo-L-proline(in) + 2 Na(+)(in). It carries out the reaction iodide(out) = iodide(in). The catalysed reaction is chloride(in) = chloride(out). The enzyme catalyses nitrate(in) = nitrate(out). It catalyses the reaction bromide(in) = bromide(out). Its function is as follows. Acts as an electrogenic sodium (Na(+)) and chloride (Cl-)-dependent sodium-coupled solute transporter, including transport of monocarboxylates (short-chain fatty acids including L-lactate, D-lactate, pyruvate, acetate, propionate, valerate and butyrate), mocarboxylate drugs (nicotinate, benzoate, salicylate and 5-aminosalicylate) and ketone bodies (beta-D-hydroxybutyrate, acetoacetate and alpha-ketoisocaproate), with a Na(+):substrate stoichiometry of between 4:1 and 2:1. Catalyzes passive carrier mediated diffusion of iodide. Mediates iodide transport from the thyrocyte into the colloid lumen through the apical membrane. Mediates sodium-coupled electrogenic transport of pyroglutamate (5-oxo-L-proline). Can mediate the transport of chloride, bromide, iodide and nitrate ions when external concentration of sodium ions is reduced. In Xenopus laevis (African clawed frog), this protein is Sodium-coupled monocarboxylate transporter 1.